The chain runs to 118 residues: Probable non-functional immunoglobulin lambda variable 1-50 (118 aa).

An N-terminal signal peptide occupies residues 1–19 (MAWSSLLLTLLAHCTGSWA). The segment at 20–44 (QSVLTQPPSVSGAPGQRVTISCTGS) is framework-1. The 99-residue stretch at 20–118 (QSVLTQPPSV…CKAWDNSLNA (99 aa)) folds into the Ig-like domain. A disulfide bond links Cys41 and Cys109. Residues 45–53 (SSNIGAGYV) are complementarity-determining-1. Residues 54–70 (VHWYQQLPGTAPKLLIY) are framework-2. The interval 71–73 (GNS) is complementarity-determining-2. Residues 74–109 (NRPSGVPDQFSGSKSGTSASLAITGLQSEDEADYYC) form a framework-3 region. The tract at residues 110-118 (KAWDNSLNA) is complementarity-determining-3.

Immunoglobulins are composed of two identical heavy chains and two identical light chains; disulfide-linked.

Its subcellular location is the secreted. The protein resides in the cell membrane. Its function is as follows. Probable non-functional open reading frame (ORF) of V region of the variable domain of immunoglobulin light chains. Non-functional ORF generally cannot participate in the synthesis of a productive immunoglobulin chain due to altered V-(D)-J or switch recombination and/or splicing site (at mRNA level) and/or conserved amino acid change (protein level). Immunoglobulins, also known as antibodies, are membrane-bound or secreted glycoproteins produced by B lymphocytes. In the recognition phase of humoral immunity, the membrane-bound immunoglobulins serve as receptors which, upon binding of a specific antigen, trigger the clonal expansion and differentiation of B lymphocytes into immunoglobulins-secreting plasma cells. Secreted immunoglobulins mediate the effector phase of humoral immunity, which results in the elimination of bound antigens. The antigen binding site is formed by the variable domain of one heavy chain, together with that of its associated light chain. Thus, each immunoglobulin has two antigen binding sites with remarkable affinity for a particular antigen. The variable domains are assembled by a process called V-(D)-J rearrangement and can then be subjected to somatic hypermutations which, after exposure to antigen and selection, allow affinity maturation for a particular antigen. This chain is Probable non-functional immunoglobulin lambda variable 1-50, found in Homo sapiens (Human).